Reading from the N-terminus, the 946-residue chain is Bifunctional glutamine synthetase adenylyltransferase/adenylyl-removing enzyme (946 aa).

Residues 1–441 (MSLLNDAALH…EFNWVIGDDE (441 aa)) form an adenylyl removase region. The segment at 448–946 (DQALSELWAL…VIKIWEKFLD (499 aa)) is adenylyl transferase.

It belongs to the GlnE family. Mg(2+) serves as cofactor.

It carries out the reaction [glutamine synthetase]-O(4)-(5'-adenylyl)-L-tyrosine + phosphate = [glutamine synthetase]-L-tyrosine + ADP. The enzyme catalyses [glutamine synthetase]-L-tyrosine + ATP = [glutamine synthetase]-O(4)-(5'-adenylyl)-L-tyrosine + diphosphate. Involved in the regulation of glutamine synthetase GlnA, a key enzyme in the process to assimilate ammonia. When cellular nitrogen levels are high, the C-terminal adenylyl transferase (AT) inactivates GlnA by covalent transfer of an adenylyl group from ATP to specific tyrosine residue of GlnA, thus reducing its activity. Conversely, when nitrogen levels are low, the N-terminal adenylyl removase (AR) activates GlnA by removing the adenylyl group by phosphorolysis, increasing its activity. The regulatory region of GlnE binds the signal transduction protein PII (GlnB) which indicates the nitrogen status of the cell. This is Bifunctional glutamine synthetase adenylyltransferase/adenylyl-removing enzyme from Psychromonas ingrahamii (strain DSM 17664 / CCUG 51855 / 37).